An 845-amino-acid chain; its full sequence is Protein P (845 aa).

The segment at 1-179 is terminal protein domain (TP); that stretch reads MPLSYQHFRK…FCGSPYSWEQ (179 aa). The tract at residues 180-348 is spacer; it reads ELHHGRLVIK…YCLSHLVNLL (169 aa). A polymerase/reverse transcriptase domain (RT) region spans residues 349 to 692; it reads EDWGPCTEHG…YMNLYPVARQ (344 aa). In terms of domain architecture, Reverse transcriptase spans 359–602; that stretch reads EHHIRIPRTP…YSLNFMGYVI (244 aa). The Mg(2+) site is built by D431, D553, and D554.

It belongs to the hepadnaviridae P protein family.

It catalyses the reaction DNA(n) + a 2'-deoxyribonucleoside 5'-triphosphate = DNA(n+1) + diphosphate. The enzyme catalyses Endonucleolytic cleavage to 5'-phosphomonoester.. With respect to regulation, activated by host HSP70 and HSP40 in vitro to be able to bind the epsilon loop of the pgRNA. Because deletion of the RNase H region renders the protein partly chaperone-independent, the chaperones may be needed indirectly to relieve occlusion of the RNA-binding site by this domain. Inhibited by several reverse-transcriptase inhibitors: Lamivudine, Adefovir and Entecavir. Multifunctional enzyme that converts the viral RNA genome into dsDNA in viral cytoplasmic capsids. This enzyme displays a DNA polymerase activity that can copy either DNA or RNA templates, and a ribonuclease H (RNase H) activity that cleaves the RNA strand of RNA-DNA heteroduplexes in a partially processive 3'- to 5'-endonucleasic mode. Neo-synthesized pregenomic RNA (pgRNA) are encapsidated together with the P protein, and reverse-transcribed inside the nucleocapsid. Initiation of reverse-transcription occurs first by binding the epsilon loop on the pgRNA genome, and is initiated by protein priming, thereby the 5'-end of (-)DNA is covalently linked to P protein. Partial (+)DNA is synthesized from the (-)DNA template and generates the relaxed circular DNA (RC-DNA) genome. After budding and infection, the RC-DNA migrates in the nucleus, and is converted into a plasmid-like covalently closed circular DNA (cccDNA). The activity of P protein does not seem to be necessary for cccDNA generation, and is presumably released from (+)DNA by host nuclear DNA repair machinery. The protein is Protein P of Homo sapiens (Human).